We begin with the raw amino-acid sequence, 2497 residues long: Integrator complex subunit 1 homolog (2497 aa).

The segment covering 1 to 10 (MMLNKIKRSK) has biased composition (basic residues). 6 disordered regions span residues 1–151 (MMLN…NNNI), 300–337 (QPQP…IKKS), 946–965 (QQQQ…QQPT), 1028–1108 (TTTT…TSSS), 1234–1292 (INNN…NQKS), and 1572–1604 (NNNN…NNIT). Low complexity-rich tracts occupy residues 37–46 (SDNNNNNSND), 60–151 (NNSI…NNNI), 305–333 (QQQQ…QPQQ), 946–963 (QQQQ…QQQQ), and 1028–1058 (TTTT…SSSL). A compositionally biased stretch (polar residues) spans 1075–1091 (SGLSGSSNGINQSSDSI). Composition is skewed to low complexity over residues 1097-1108 (STSPTTTTTSSS), 1234-1265 (INNN…NINK), 1272-1289 (HSNS…NKNN), and 1572-1602 (NNNN…NNNN). Residues 1645-1675 (RILKNTTQQKQQKQQQKESVQKSIQSLSKLI) are a coiled coil. Positions 2084–2115 (QQQQQQQQQQQQQQKQQSNNSNNINNNNNNNN) are enriched in low complexity. 2 disordered regions span residues 2084-2123 (QQQQ…QKSK) and 2329-2350 (NNNN…NNNN).

Belongs to the Integrator subunit 1 family. Component of the Integrator complex. The core complex associates with protein phosphatase 2A subunits to form the Integrator-PP2A (INTAC) complex.

Its subcellular location is the nucleus. Its function is as follows. Component of the integrator complex, a multiprotein complex that terminates RNA polymerase II (Pol II) transcription in the promoter-proximal region of genes. The integrator complex provides a quality checkpoint during transcription elongation by driving premature transcription termination of transcripts that are unfavorably configured for transcriptional elongation: the complex terminates transcription by (1) catalyzing dephosphorylation of the C-terminal domain (CTD) of Pol II subunit polr2a, (2) degrading the exiting nascent RNA transcript via endonuclease activity and (3) promoting the release of Pol II from bound DNA. The integrator complex is also involved in terminating the synthesis of non-coding Pol II transcripts, such as enhancer RNAs (eRNAs), small nuclear RNAs (snRNAs), telomerase RNAs and long non-coding RNAs (lncRNAs). The chain is Integrator complex subunit 1 homolog (ints1) from Dictyostelium discoideum (Social amoeba).